A 525-amino-acid polypeptide reads, in one-letter code: Bifunctional purine biosynthesis protein PurH (525 aa).

The MGS-like domain occupies 1–149; sequence MSDPVIKRAL…KNNESVTVVT (149 aa).

This sequence belongs to the PurH family.

The catalysed reaction is (6R)-10-formyltetrahydrofolate + 5-amino-1-(5-phospho-beta-D-ribosyl)imidazole-4-carboxamide = 5-formamido-1-(5-phospho-D-ribosyl)imidazole-4-carboxamide + (6S)-5,6,7,8-tetrahydrofolate. It catalyses the reaction IMP + H2O = 5-formamido-1-(5-phospho-D-ribosyl)imidazole-4-carboxamide. The protein operates within purine metabolism; IMP biosynthesis via de novo pathway; 5-formamido-1-(5-phospho-D-ribosyl)imidazole-4-carboxamide from 5-amino-1-(5-phospho-D-ribosyl)imidazole-4-carboxamide (10-formyl THF route): step 1/1. It functions in the pathway purine metabolism; IMP biosynthesis via de novo pathway; IMP from 5-formamido-1-(5-phospho-D-ribosyl)imidazole-4-carboxamide: step 1/1. This Pelodictyon phaeoclathratiforme (strain DSM 5477 / BU-1) protein is Bifunctional purine biosynthesis protein PurH.